We begin with the raw amino-acid sequence, 330 residues long: 5-dehydro-2-deoxygluconokinase (330 aa).

Belongs to the carbohydrate kinase PfkB family.

It catalyses the reaction 5-dehydro-2-deoxy-D-gluconate + ATP = 6-phospho-5-dehydro-2-deoxy-D-gluconate + ADP + H(+). Its pathway is polyol metabolism; myo-inositol degradation into acetyl-CoA; acetyl-CoA from myo-inositol: step 5/7. Catalyzes the phosphorylation of 5-dehydro-2-deoxy-D-gluconate (2-deoxy-5-keto-D-gluconate or DKG) to 6-phospho-5-dehydro-2-deoxy-D-gluconate (DKGP). In Bacillus velezensis (strain DSM 23117 / BGSC 10A6 / LMG 26770 / FZB42) (Bacillus amyloliquefaciens subsp. plantarum), this protein is 5-dehydro-2-deoxygluconokinase.